Here is a 236-residue protein sequence, read N- to C-terminus: Class B acid phosphatase (236 aa).

Residues 1–22 form the signal peptide; the sequence is MKNVMKLSVIALLTAAAVPAMA. Asp67 (nucleophile) is an active-site residue. Mg(2+) contacts are provided by Asp67 and Asp69. Asp69 functions as the Proton donor in the catalytic mechanism. Substrate-binding positions include 136 to 137 and Lys176; that span reads TG. Asp191 is a Mg(2+) binding site.

This sequence belongs to the class B bacterial acid phosphatase family. Homotetramer. Requires Mg(2+) as cofactor.

The protein localises to the periplasm. The catalysed reaction is a phosphate monoester + H2O = an alcohol + phosphate. Dephosphorylates several organic phosphate monoesters. Also has a phosphotransferase activity catalyzing the transfer of low-energy phosphate groups from organic phosphate monoesters to free hydroxyl groups of various organic compounds. This Haemophilus influenzae (strain ATCC 51907 / DSM 11121 / KW20 / Rd) protein is Class B acid phosphatase (aphA).